A 436-amino-acid chain; its full sequence is UDP-N-acetylmuramate--L-alanine ligase (436 aa).

108–114 (GAHGKTS) lines the ATP pocket.

It belongs to the MurCDEF family.

It is found in the cytoplasm. The enzyme catalyses UDP-N-acetyl-alpha-D-muramate + L-alanine + ATP = UDP-N-acetyl-alpha-D-muramoyl-L-alanine + ADP + phosphate + H(+). The protein operates within cell wall biogenesis; peptidoglycan biosynthesis. Functionally, cell wall formation. This Bacillus cereus (strain G9842) protein is UDP-N-acetylmuramate--L-alanine ligase.